The following is a 267-amino-acid chain: Membrane-spanning 4-domains subfamily A member 10 (267 aa).

Over 1–61 (MKAEATVIPS…KKSSLLKELG (61 aa)) the chain is Cytoplasmic. A helical membrane pass occupies residues 62 to 82 (AFHITIALLHLVFGGYLASIV). Residues 83 to 91 (KNLHLVVLK) lie on the Extracellular side of the membrane. Residues 92 to 112 (SWYPFWGAASFLISGILAITM) form a helical membrane-spanning segment. The Cytoplasmic segment spans residues 113 to 121 (KTFSKTYLK). A helical membrane pass occupies residues 122–142 (MLCLMTNLISLFCVLSGLFVI). Over 143–171 (SKDLFLESPFESPIWRMYPNSTVHIQRLE) the chain is Extracellular. The chain crosses the membrane as a helical span at residues 172–192 (LALLCFTVLELFLPVPTAVTA). Over 193–267 (WRGDCPSAKN…GAAIWTQTAN (75 aa)) the chain is Cytoplasmic.

The protein belongs to the MS4A family.

The protein localises to the membrane. In terms of biological role, may be involved in signal transduction as a component of a multimeric receptor complex. This is Membrane-spanning 4-domains subfamily A member 10 (MS4A10) from Homo sapiens (Human).